Consider the following 475-residue polypeptide: Sulfate adenylyltransferase subunit 1 (475 aa).

One can recognise a tr-type G domain in the interval 25 to 239 (KSLLRFLTCG…EVLETVEIQR (215 aa)). A G1 region spans residues 34 to 41 (GSVDDGKS). 34 to 41 (GSVDDGKS) is a GTP binding site. Residues 92–96 (GITID) are G2. The tract at residues 113 to 116 (DTPG) is G3. Residues 113-117 (DTPGH) and 168-171 (NKMD) each bind GTP. A G4 region spans residues 168–171 (NKMD). The tract at residues 206 to 208 (SAL) is G5.

It belongs to the TRAFAC class translation factor GTPase superfamily. Classic translation factor GTPase family. CysN/NodQ subfamily. As to quaternary structure, heterodimer composed of CysD, the smaller subunit, and CysN.

The enzyme catalyses sulfate + ATP + H(+) = adenosine 5'-phosphosulfate + diphosphate. Its pathway is sulfur metabolism; hydrogen sulfide biosynthesis; sulfite from sulfate: step 1/3. With CysD forms the ATP sulfurylase (ATPS) that catalyzes the adenylation of sulfate producing adenosine 5'-phosphosulfate (APS) and diphosphate, the first enzymatic step in sulfur assimilation pathway. APS synthesis involves the formation of a high-energy phosphoric-sulfuric acid anhydride bond driven by GTP hydrolysis by CysN coupled to ATP hydrolysis by CysD. In Shigella dysenteriae serotype 1 (strain Sd197), this protein is Sulfate adenylyltransferase subunit 1.